Reading from the N-terminus, the 120-residue chain is Small ribosomal subunit protein bS6 (120 aa).

The protein belongs to the bacterial ribosomal protein bS6 family.

In terms of biological role, binds together with bS18 to 16S ribosomal RNA. The protein is Small ribosomal subunit protein bS6 of Blochmanniella floridana.